Here is a 170-residue protein sequence, read N- to C-terminus: Adenine phosphoribosyltransferase (170 aa).

The protein belongs to the purine/pyrimidine phosphoribosyltransferase family. Homodimer.

Its subcellular location is the cytoplasm. The catalysed reaction is AMP + diphosphate = 5-phospho-alpha-D-ribose 1-diphosphate + adenine. It participates in purine metabolism; AMP biosynthesis via salvage pathway; AMP from adenine: step 1/1. Functionally, catalyzes a salvage reaction resulting in the formation of AMP, that is energically less costly than de novo synthesis. The sequence is that of Adenine phosphoribosyltransferase from Flavobacterium johnsoniae (strain ATCC 17061 / DSM 2064 / JCM 8514 / BCRC 14874 / CCUG 350202 / NBRC 14942 / NCIMB 11054 / UW101) (Cytophaga johnsonae).